A 211-amino-acid chain; its full sequence is Large ribosomal subunit protein uL4 (211 aa).

The tract at residues Q40–T80 is disordered. The segment covering Q41 to R54 has biased composition (polar residues). Positions G60–G71 are enriched in basic residues.

This sequence belongs to the universal ribosomal protein uL4 family. In terms of assembly, part of the 50S ribosomal subunit.

One of the primary rRNA binding proteins, this protein initially binds near the 5'-end of the 23S rRNA. It is important during the early stages of 50S assembly. It makes multiple contacts with different domains of the 23S rRNA in the assembled 50S subunit and ribosome. Its function is as follows. Forms part of the polypeptide exit tunnel. The polypeptide is Large ribosomal subunit protein uL4 (Prochlorococcus marinus (strain MIT 9211)).